Consider the following 220-residue polypeptide: Putative respiratory nitrate reductase subunit Rieske (220 aa).

Residues 118-206 (KAPTLLVRHA…ITVSSEGYLI (89 aa)) form the Rieske domain. [2Fe-2S] cluster is bound by residues cysteine 151, histidine 153, cysteine 168, and histidine 171. Cysteine 156 and cysteine 170 are oxidised to a cystine.

In terms of assembly, probable multiprotein complex; a catalytic heterodimer of an alpha and beta chain is proposed to associate with additional subunits involved in membrane attachment and electron transfer. The cofactor is [2Fe-2S] cluster.

It is found in the cell membrane. Functionally, the respiratory membrane-bound nitrate reductase enzyme complex plays a role in generation of metabolic energy by using nitrate as a terminal electron acceptor during anaerobic conditions. Proposed Rieske subunit involved in a protonmotive Q-cycle mechanism-based electron transfer electrons to the beta subunit. This is Putative respiratory nitrate reductase subunit Rieske (narB) from Haloferax mediterranei (strain ATCC 33500 / DSM 1411 / JCM 8866 / NBRC 14739 / NCIMB 2177 / R-4) (Halobacterium mediterranei).